The primary structure comprises 62 residues: Sperm protamine P1 (62 aa).

Positions 1–62 (MARYRHSRSR…RYSRRRRRRY (62 aa)) are disordered.

Belongs to the protamine P1 family. Testis.

The protein resides in the nucleus. Its subcellular location is the chromosome. Functionally, protamines substitute for histones in the chromatin of sperm during the haploid phase of spermatogenesis. They compact sperm DNA into a highly condensed, stable and inactive complex. This is Sperm protamine P1 (PRM1) from Wallabia bicolor (Swamp wallaby).